The following is a 329-amino-acid chain: MQFIDQARITVRAGRGGDGIMAFRREKYVPAGGPSGGDGGEGGNVVLEADGNLQTLLDFKYNRLFPAPDGRRGGPNRCTGASGKDLIIKVPCGTEVRHLSTGILLGDLTRSDDLLVVAFGGRGGLGNAHYLSNRNRAPEKFTEGRDGEEWFLQLELKLLAEVGIIGLPNAGKSTLISVLSAARPKIADYPFTTLVPNLGVVRRPSGDGTVFADIPGLIAGAAQGAGLGHDFLRHIERTRLLIHVLDGGAEDPVEDLLVVEKELVAYGHDLVERPRLLVLNKQELLDEQHQDQLVDALQAASGRRLILISAAMGLGLEGLLAQVWKELGV.

The Obg domain occupies 1-159; it reads MQFIDQARIT…WFLQLELKLL (159 aa). The region spanning 160-328 is the OBG-type G domain; it reads AEVGIIGLPN…LLAQVWKELG (169 aa). Residues 166–173, 191–195, 213–216, 280–283, and 309–311 contribute to the ATP site; these read GLPNAGKS, FTTLV, DIPG, NKQE, and SAA. 2 residues coordinate Mg(2+): S173 and T193.

Belongs to the TRAFAC class OBG-HflX-like GTPase superfamily. OBG GTPase family. In terms of assembly, monomer. Mg(2+) serves as cofactor.

Its subcellular location is the cytoplasm. In terms of biological role, an essential GTPase which binds GTP, GDP and possibly (p)ppGpp with moderate affinity, with high nucleotide exchange rates and a fairly low GTP hydrolysis rate. Plays a role in control of the cell cycle, stress response, ribosome biogenesis and in those bacteria that undergo differentiation, in morphogenesis control. This Prochlorococcus marinus (strain MIT 9303) protein is GTPase Obg.